Consider the following 174-residue polypeptide: NADH-ubiquinone oxidoreductase chain 6 (174 aa).

5 consecutive transmembrane segments (helical) span residues 1–21 (MTYV…GFSS), 24–44 (SPIY…MIIL), 47–67 (GGAY…MVVF), 86–106 (FEVL…VLWV), and 151–171 (WLVV…IEIT).

Belongs to the complex I subunit 6 family. Core subunit of respiratory chain NADH dehydrogenase (Complex I) which is composed of 45 different subunits.

It is found in the mitochondrion inner membrane. The catalysed reaction is a ubiquinone + NADH + 5 H(+)(in) = a ubiquinol + NAD(+) + 4 H(+)(out). Core subunit of the mitochondrial membrane respiratory chain NADH dehydrogenase (Complex I) which catalyzes electron transfer from NADH through the respiratory chain, using ubiquinone as an electron acceptor. Essential for the catalytic activity and assembly of complex I. This is NADH-ubiquinone oxidoreductase chain 6 (MT-ND6) from Papio hamadryas (Hamadryas baboon).